Here is a 244-residue protein sequence, read N- to C-terminus: NAD(P)H-quinone oxidoreductase subunit K (244 aa).

Residues Cys-60, Cys-61, Cys-125, and Cys-156 each coordinate [4Fe-4S] cluster. The disordered stretch occupies residues 213 to 244; that stretch reads TSANSIPSSKKEKITELPDNNEKAEIIDTLEN. A compositionally biased stretch (basic and acidic residues) spans 221–238; it reads SKKEKITELPDNNEKAEI.

It belongs to the complex I 20 kDa subunit family. In terms of assembly, NDH-1 can be composed of about 15 different subunits; different subcomplexes with different compositions have been identified which probably have different functions. Requires [4Fe-4S] cluster as cofactor.

Its subcellular location is the cellular thylakoid membrane. The enzyme catalyses a plastoquinone + NADH + (n+1) H(+)(in) = a plastoquinol + NAD(+) + n H(+)(out). It catalyses the reaction a plastoquinone + NADPH + (n+1) H(+)(in) = a plastoquinol + NADP(+) + n H(+)(out). Functionally, NDH-1 shuttles electrons from an unknown electron donor, via FMN and iron-sulfur (Fe-S) centers, to quinones in the respiratory and/or the photosynthetic chain. The immediate electron acceptor for the enzyme in this species is believed to be plastoquinone. Couples the redox reaction to proton translocation, and thus conserves the redox energy in a proton gradient. Cyanobacterial NDH-1 also plays a role in inorganic carbon-concentration. In Prochlorococcus marinus (strain MIT 9301), this protein is NAD(P)H-quinone oxidoreductase subunit K.